We begin with the raw amino-acid sequence, 328 residues long: D-cysteine desulfhydrase (328 aa).

K51 is modified (N6-(pyridoxal phosphate)lysine).

Belongs to the ACC deaminase/D-cysteine desulfhydrase family. In terms of assembly, homodimer. Pyridoxal 5'-phosphate serves as cofactor.

The enzyme catalyses D-cysteine + H2O = hydrogen sulfide + pyruvate + NH4(+) + H(+). Its function is as follows. Catalyzes the alpha,beta-elimination reaction of D-cysteine and of several D-cysteine derivatives. It could be a defense mechanism against D-cysteine. In Salmonella paratyphi A (strain AKU_12601), this protein is D-cysteine desulfhydrase.